The primary structure comprises 1192 residues: Integrator complex subunit 2 (1192 aa).

The chain crosses the membrane as a helical span at residues Phe420–Ser436.

This sequence belongs to the Integrator subunit 2 family. Component of the Integrator complex, composed of core subunits INTS1, INTS2, INTS3, INTS4, INTS5, INTS6, INTS7, INTS8, INTS9/RC74, INTS10, INTS11/CPSF3L, INTS12, INTS13, INTS14 and INTS15. The core complex associates with protein phosphatase 2A subunits PPP2CA and PPP2R1A, to form the Integrator-PP2A (INTAC) complex.

It is found in the nucleus. It localises to the nucleus membrane. Its subcellular location is the cytoplasm. Its function is as follows. Component of the integrator complex, a multiprotein complex that terminates RNA polymerase II (Pol II) transcription in the promoter-proximal region of genes. The integrator complex provides a quality checkpoint during transcription elongation by driving premature transcription termination of transcripts that are unfavorably configured for transcriptional elongation: the complex terminates transcription by (1) catalyzing dephosphorylation of the C-terminal domain (CTD) of Pol II subunit POLR2A/RPB1 and SUPT5H/SPT5, (2) degrading the exiting nascent RNA transcript via endonuclease activity and (3) promoting the release of Pol II from bound DNA. The integrator complex is also involved in terminating the synthesis of non-coding Pol II transcripts, such as enhancer RNAs (eRNAs), small nuclear RNAs (snRNAs), telomerase RNAs and long non-coding RNAs (lncRNAs). The chain is Integrator complex subunit 2 (INTS2) from Gallus gallus (Chicken).